The chain runs to 552 residues: Non-structural protein NS1 (552 aa).

The chain is Non-structural protein NS1 (Segment-5) from Bluetongue virus 1 (isolate South Africa) (BTV 1).